The following is a 78-amino-acid chain: Hainantoxin-XX (78 aa).

Residues 1–23 (MKSATLLALSFLLIALYFLICEA) form the signal peptide. Positions 24–47 (EHSRYEEHEILEENMGDVVNLEQR) are excised as a propeptide. 3 disulfides stabilise this stretch: C49–C62, C56–C66, and C61–C77.

The protein belongs to the hainantoxin family. 20 subfamily. In terms of tissue distribution, expressed by the venom gland.

It is found in the secreted. In terms of biological role, putative ion channel inhibitor. The polypeptide is Hainantoxin-XX (Cyriopagopus hainanus (Chinese bird spider)).